Here is a 158-residue protein sequence, read N- to C-terminus: NADPH-dependent 7-cyano-7-deazaguanine reductase (158 aa).

Cys-56 (thioimide intermediate) is an active-site residue. The Proton donor role is filled by Asp-63. Residues 78-80 (VES) and 97-98 (HE) contribute to the substrate site.

It belongs to the GTP cyclohydrolase I family. QueF type 1 subfamily.

Its subcellular location is the cytoplasm. It catalyses the reaction 7-aminomethyl-7-carbaguanine + 2 NADP(+) = 7-cyano-7-deazaguanine + 2 NADPH + 3 H(+). It participates in tRNA modification; tRNA-queuosine biosynthesis. Its function is as follows. Catalyzes the NADPH-dependent reduction of 7-cyano-7-deazaguanine (preQ0) to 7-aminomethyl-7-deazaguanine (preQ1). This is NADPH-dependent 7-cyano-7-deazaguanine reductase from Rhodopseudomonas palustris (strain HaA2).